We begin with the raw amino-acid sequence, 469 residues long: Cytochrome c biogenesis protein CcsB (469 aa).

3 helical membrane passes run 30–50, 89–109, and 175–195; these read LRLA…GTVI, TPWF…CSLT, and IGPI…IWGS.

The protein belongs to the Ccs1/CcsB family. May interact with CcsA.

The protein resides in the cellular thylakoid membrane. Functionally, required during biogenesis of c-type cytochromes (cytochrome c6 and cytochrome f) at the step of heme attachment. This Synechococcus sp. (strain JA-2-3B'a(2-13)) (Cyanobacteria bacterium Yellowstone B-Prime) protein is Cytochrome c biogenesis protein CcsB.